The chain runs to 260 residues: MAVGKNKRMSKGKKGGKKKAVDPFTKKDWYDIKAPSMFSVRNIGKTLVSRTQGTKIASDGLKGRIFEISLADLNNDEDQSFRKMKLKCEDVQGKNVLTNFAGMDFTTDKIRSLVRKWFSLIECFVDVKTTDGYTLRVFCIGFTKRRMDQAKRTCYAQSAQIRKIRAKMVEIITRECTTCDLKELVLKFIPEVIGKEIEKSCAGIYPLQNVYIRKVKILKAPKFDLTKLMEVHGDYSGEAVGEAVARPVEEKAEETAEAAE.

A compositionally biased stretch (basic residues) spans 1–18; it reads MAVGKNKRMSKGKKGGKK. The disordered stretch occupies residues 1-20; sequence MAVGKNKRMSKGKKGGKKKA.

The protein belongs to the eukaryotic ribosomal protein eS1 family. As to quaternary structure, component of the small ribosomal subunit. Mature ribosomes consist of a small (40S) and a large (60S) subunit. The 40S subunit contains about 33 different proteins and 1 molecule of RNA (18S). The 60S subunit contains about 49 different proteins and 3 molecules of RNA (25S, 5.8S and 5S).

The protein localises to the cytoplasm. In Ostreococcus lucimarinus (strain CCE9901), this protein is Small ribosomal subunit protein eS1.